The chain runs to 45 residues: Large ribosomal subunit protein bL34 (45 aa).

This sequence belongs to the bacterial ribosomal protein bL34 family.

This Frankia casuarinae (strain DSM 45818 / CECT 9043 / HFP020203 / CcI3) protein is Large ribosomal subunit protein bL34.